A 399-amino-acid polypeptide reads, in one-letter code: MTKKRHLFTSESVTEGHPDKICDQISDSILDAILSKDANARVACETTVTTGLVLVAGEITTSTYVDIPKIVRETIQGIGYTRAKYGFDAETCAVLTSIDEQSADIAMGVDQALEAREGQMTDAEIEAIGAGDQGLMFGFACNETQELMPLPISLAHKLARRLTEVRKNDTLSYLRPDGKTQVTVEYDENGKPVRVDTIVISTQHHPDVTWEEIDRDLKEHVIKAVVPAELIDGETKFFINPTGRFVIGGPQGDAGLTGRKIIVDTYGGYARHGGGAFSGKDATKVDRSAAYAARYVAKNIVAAGLAEKAEVQLAYAIGVAQPVSISVDTFGTGKVSEDVLVELVRNNFDLRPAGIIKMLDLRRPIYKQTAAYGHFGRTDVDLSWERTDKAVALKEQAGL.

Residue His-17 coordinates ATP. A Mg(2+)-binding site is contributed by Asp-19. Glu-45 is a binding site for K(+). Residues Glu-58 and Gln-101 each contribute to the L-methionine site. The flexible loop stretch occupies residues 101 to 111 (QSADIAMGVDQ). ATP-binding positions include 177–179 (DGK), 244–245 (RF), Asp-253, 259–260 (RK), Ala-276, and Lys-280. Asp-253 contributes to the L-methionine binding site. Lys-284 is an L-methionine binding site.

Belongs to the AdoMet synthase family. As to quaternary structure, homotetramer; dimer of dimers. Mg(2+) serves as cofactor. K(+) is required as a cofactor.

It localises to the cytoplasm. It catalyses the reaction L-methionine + ATP + H2O = S-adenosyl-L-methionine + phosphate + diphosphate. Its pathway is amino-acid biosynthesis; S-adenosyl-L-methionine biosynthesis; S-adenosyl-L-methionine from L-methionine: step 1/1. In terms of biological role, catalyzes the formation of S-adenosylmethionine (AdoMet) from methionine and ATP. The overall synthetic reaction is composed of two sequential steps, AdoMet formation and the subsequent tripolyphosphate hydrolysis which occurs prior to release of AdoMet from the enzyme. This chain is S-adenosylmethionine synthase, found in Bacillus thuringiensis (strain Al Hakam).